Here is a 243-residue protein sequence, read N- to C-terminus: 3-deoxy-manno-octulosonate cytidylyltransferase (243 aa).

The protein belongs to the KdsB family.

The protein localises to the cytoplasm. It carries out the reaction 3-deoxy-alpha-D-manno-oct-2-ulosonate + CTP = CMP-3-deoxy-beta-D-manno-octulosonate + diphosphate. It functions in the pathway nucleotide-sugar biosynthesis; CMP-3-deoxy-D-manno-octulosonate biosynthesis; CMP-3-deoxy-D-manno-octulosonate from 3-deoxy-D-manno-octulosonate and CTP: step 1/1. The protein operates within bacterial outer membrane biogenesis; lipopolysaccharide biosynthesis. Functionally, activates KDO (a required 8-carbon sugar) for incorporation into bacterial lipopolysaccharide in Gram-negative bacteria. This Helicobacter pylori (strain J99 / ATCC 700824) (Campylobacter pylori J99) protein is 3-deoxy-manno-octulosonate cytidylyltransferase.